The primary structure comprises 342 residues: Holliday junction branch migration complex subunit RuvB (342 aa).

A disordered region spans residues 1 to 21 (MSVEHSPVDPSAEPPEKAEEA). Positions 1 to 184 (MSVEHSPVDP…FGFTAQLDYY (184 aa)) are large ATPase domain (RuvB-L). ATP contacts are provided by residues Leu-23, Arg-24, Gly-65, Lys-68, Thr-69, Thr-70, 131–133 (EDF), Arg-174, Tyr-184, and Arg-221. Position 69 (Thr-69) interacts with Mg(2+). The small ATPAse domain (RuvB-S) stretch occupies residues 185–255 (EVADLERIVT…GAETALDLYE (71 aa)). Residues 258 to 342 (PLGLDRLDRA…PPDSSGEGLF (85 aa)) form a head domain (RuvB-H) region. Residues Arg-313 and Arg-318 each coordinate DNA.

The protein belongs to the RuvB family. Homohexamer. Forms an RuvA(8)-RuvB(12)-Holliday junction (HJ) complex. HJ DNA is sandwiched between 2 RuvA tetramers; dsDNA enters through RuvA and exits via RuvB. An RuvB hexamer assembles on each DNA strand where it exits the tetramer. Each RuvB hexamer is contacted by two RuvA subunits (via domain III) on 2 adjacent RuvB subunits; this complex drives branch migration. In the full resolvosome a probable DNA-RuvA(4)-RuvB(12)-RuvC(2) complex forms which resolves the HJ.

Its subcellular location is the cytoplasm. The enzyme catalyses ATP + H2O = ADP + phosphate + H(+). Its function is as follows. The RuvA-RuvB-RuvC complex processes Holliday junction (HJ) DNA during genetic recombination and DNA repair, while the RuvA-RuvB complex plays an important role in the rescue of blocked DNA replication forks via replication fork reversal (RFR). RuvA specifically binds to HJ cruciform DNA, conferring on it an open structure. The RuvB hexamer acts as an ATP-dependent pump, pulling dsDNA into and through the RuvAB complex. RuvB forms 2 homohexamers on either side of HJ DNA bound by 1 or 2 RuvA tetramers; 4 subunits per hexamer contact DNA at a time. Coordinated motions by a converter formed by DNA-disengaged RuvB subunits stimulates ATP hydrolysis and nucleotide exchange. Immobilization of the converter enables RuvB to convert the ATP-contained energy into a lever motion, pulling 2 nucleotides of DNA out of the RuvA tetramer per ATP hydrolyzed, thus driving DNA branch migration. The RuvB motors rotate together with the DNA substrate, which together with the progressing nucleotide cycle form the mechanistic basis for DNA recombination by continuous HJ branch migration. Branch migration allows RuvC to scan DNA until it finds its consensus sequence, where it cleaves and resolves cruciform DNA. The protein is Holliday junction branch migration complex subunit RuvB of Cutibacterium acnes (strain DSM 16379 / KPA171202) (Propionibacterium acnes).